The chain runs to 124 residues: Large ribosomal subunit protein bL20 (124 aa).

The protein belongs to the bacterial ribosomal protein bL20 family.

Functionally, binds directly to 23S ribosomal RNA and is necessary for the in vitro assembly process of the 50S ribosomal subunit. It is not involved in the protein synthesizing functions of that subunit. This Ehrlichia canis (strain Jake) protein is Large ribosomal subunit protein bL20.